Here is a 231-residue protein sequence, read N- to C-terminus: 5'-methylthioadenosine/S-adenosylhomocysteine nucleosidase (231 aa).

Residue glutamate 13 is the Proton acceptor of the active site. Residues glycine 79, methionine 154, and methionine 175–glutamate 176 contribute to the substrate site. Residue aspartate 199 is the Proton donor of the active site.

This sequence belongs to the PNP/UDP phosphorylase family. MtnN subfamily.

It carries out the reaction S-adenosyl-L-homocysteine + H2O = S-(5-deoxy-D-ribos-5-yl)-L-homocysteine + adenine. The catalysed reaction is S-methyl-5'-thioadenosine + H2O = 5-(methylsulfanyl)-D-ribose + adenine. It catalyses the reaction 5'-deoxyadenosine + H2O = 5-deoxy-D-ribose + adenine. The protein operates within amino-acid biosynthesis; L-methionine biosynthesis via salvage pathway; S-methyl-5-thio-alpha-D-ribose 1-phosphate from S-methyl-5'-thioadenosine (hydrolase route): step 1/2. In terms of biological role, catalyzes the irreversible cleavage of the glycosidic bond in both 5'-methylthioadenosine (MTA) and S-adenosylhomocysteine (SAH/AdoHcy) to adenine and the corresponding thioribose, 5'-methylthioribose and S-ribosylhomocysteine, respectively. Also cleaves 5'-deoxyadenosine, a toxic by-product of radical S-adenosylmethionine (SAM) enzymes, into 5-deoxyribose and adenine. This chain is 5'-methylthioadenosine/S-adenosylhomocysteine nucleosidase, found in Marinomonas sp. (strain MWYL1).